Here is a 213-residue protein sequence, read N- to C-terminus: RxLR effector protein PexRD1 (213 aa).

The signal sequence occupies residues 1-19 (MRACNTLLPTAIVLTSCDA). The short motif at 50–77 (RQLRGFYATENTDPVNNQDTAHEDGEER) is the RxLR-dEER element.

It belongs to the RxLR effector family.

The protein resides in the secreted. It localises to the host nucleus. Its function is as follows. Effector that enhances P.infestans colonization of Nicotiana benthamiana leaves. In Phytophthora infestans (strain T30-4) (Potato late blight agent), this protein is RxLR effector protein PexRD1.